A 195-amino-acid chain; its full sequence is UPF0314 protein RHE_CH03951 (195 aa).

The next 4 membrane-spanning stretches (helical) occupy residues 14 to 34 (AFWF…EYLM), 64 to 84 (WYTP…YLIL), 128 to 148 (DSIL…FFAA), and 150 to 170 (APVA…GYVI).

This sequence belongs to the UPF0314 family.

The protein localises to the cell membrane. This Rhizobium etli (strain ATCC 51251 / DSM 11541 / JCM 21823 / NBRC 15573 / CFN 42) protein is UPF0314 protein RHE_CH03951.